A 284-amino-acid chain; its full sequence is ATP synthase subunit a (284 aa).

Helical transmembrane passes span 55 to 75 (AIHV…LGLF), 116 to 136 (IAPL…LKLI), 165 to 185 (FGMS…VKGV), 196 to 216 (PFNH…ALII), 234 to 254 (VVFI…NVPW), and 255 to 275 (AIFH…LTVV).

This sequence belongs to the ATPase A chain family. In terms of assembly, F-type ATPases have 2 components, CF(1) - the catalytic core - and CF(0) - the membrane proton channel. CF(1) has five subunits: alpha(3), beta(3), gamma(1), delta(1), epsilon(1). CF(0) has three main subunits: a(1), b(2) and c(9-12). The alpha and beta chains form an alternating ring which encloses part of the gamma chain. CF(1) is attached to CF(0) by a central stalk formed by the gamma and epsilon chains, while a peripheral stalk is formed by the delta and b chains.

It is found in the cell inner membrane. Key component of the proton channel; it plays a direct role in the translocation of protons across the membrane. This chain is ATP synthase subunit a, found in Marinobacter nauticus (strain ATCC 700491 / DSM 11845 / VT8) (Marinobacter aquaeolei).